A 274-amino-acid polypeptide reads, in one-letter code: Undecaprenyl-diphosphatase (274 aa).

7 consecutive transmembrane segments (helical) span residues 21–39 (FLPI…LLGF), 44–64 (AQVF…LVYW), 85–105 (FNLA…GKAI), 109–129 (LFTP…ILWA), 185–205 (ATDF…VYSL), 214–234 (VADL…AWLC), and 247–267 (FVPF…TAST).

It belongs to the UppP family.

The protein localises to the cell inner membrane. It catalyses the reaction di-trans,octa-cis-undecaprenyl diphosphate + H2O = di-trans,octa-cis-undecaprenyl phosphate + phosphate + H(+). Catalyzes the dephosphorylation of undecaprenyl diphosphate (UPP). Confers resistance to bacitracin. This Verminephrobacter eiseniae (strain EF01-2) protein is Undecaprenyl-diphosphatase.